Consider the following 570-residue polypeptide: Periplasmic trehalase (570 aa).

The N-terminal stretch at 1-34 is a signal peptide; that stretch reads MIPPEIRRSVLLQKAIKLALAGTLLTFASFSATA. Substrate-binding positions include arginine 159, 166-167, asparagine 203, 212-214, 284-286, and glycine 317; these read WD, RSQ, and RPE. Active-site proton donor/acceptor residues include aspartate 319 and glutamate 503. Glutamate 518 is a substrate binding site. The segment at 544–570 is disordered; sequence KPCDSVPSTRPASLSATPTKTPSAATQ. Residues 554 to 570 are compositionally biased toward low complexity; it reads PASLSATPTKTPSAATQ.

It belongs to the glycosyl hydrolase 37 family. As to quaternary structure, monomer.

The protein resides in the periplasm. The catalysed reaction is alpha,alpha-trehalose + H2O = alpha-D-glucose + beta-D-glucose. Functionally, provides the cells with the ability to utilize trehalose at high osmolarity by splitting it into glucose molecules that can subsequently be taken up by the phosphotransferase-mediated uptake system. This chain is Periplasmic trehalase, found in Salmonella dublin (strain CT_02021853).